Here is a 599-residue protein sequence, read N- to C-terminus: CAP-Gly domain-containing linker protein 4 (599 aa).

ANK repeat units lie at residues 65–101 (TSVS…NVND), 149–180 (TNMN…DVDA), and 186–215 (NFGT…NPAF). The region spanning 303–345 (GTTEFASGQWAGIELDEPEGKNNGSVGRVQYFKCAPKYGIFAP) is the CAP-Gly 1 domain. Residues 387-482 (SGLMTSKKEN…TSAANNTHRE (96 aa)) form a disordered region. The segment covering 443 to 462 (LSTSSSSGKKTLSKSPSLPS) has biased composition (low complexity). The segment covering 468 to 478 (LKSSTTSAANN) has biased composition (polar residues). Positions 505–547 (GTTNFAPGYWYGIELEKPHGKNDGSVGGVQYFSCSPRYGIFAP) constitute a CAP-Gly 2 domain. S557 carries the phosphoserine modification. The segment at 565-599 (SSNKQNHSYPGFRRSFSTTSASSQKEINRRNAFAK) is disordered. The segment covering 576–587 (FRRSFSTTSASS) has biased composition (low complexity).

The sequence is that of CAP-Gly domain-containing linker protein 4 (Clip4) from Rattus norvegicus (Rat).